Reading from the N-terminus, the 60-residue chain is uncharacterized protein (60 aa).

The tract at residues 27–50 is disordered; the sequence is VKNNNNNNNNNNNNNNNNNNNNNK. The segment covering 29 to 49 has biased composition (low complexity); it reads NNNNNNNNNNNNNNNNNNNNN.

This is an uncharacterized protein from Dictyostelium discoideum (Social amoeba).